The following is a 1270-amino-acid chain: DNA-directed RNA polymerase subunit beta (1270 aa).

Belongs to the RNA polymerase beta chain family. In terms of assembly, the RNAP catalytic core consists of 2 alpha, 1 beta, 1 beta' and 1 omega subunit. When a sigma factor is associated with the core the holoenzyme is formed, which can initiate transcription.

It catalyses the reaction RNA(n) + a ribonucleoside 5'-triphosphate = RNA(n+1) + diphosphate. Its function is as follows. DNA-dependent RNA polymerase catalyzes the transcription of DNA into RNA using the four ribonucleoside triphosphates as substrates. This is DNA-directed RNA polymerase subunit beta from Flavobacterium johnsoniae (strain ATCC 17061 / DSM 2064 / JCM 8514 / BCRC 14874 / CCUG 350202 / NBRC 14942 / NCIMB 11054 / UW101) (Cytophaga johnsonae).